Reading from the N-terminus, the 430-residue chain is Adenylosuccinate synthetase (430 aa).

GTP contacts are provided by residues 12–18 (GDEGKGK) and 40–42 (GHT). The Proton acceptor role is filled by Asp13. Mg(2+)-binding residues include Asp13 and Gly40. IMP-binding positions include 13-16 (DEGK), 38-41 (NAGH), Thr129, Arg143, Gln224, Thr239, and Arg303. His41 acts as the Proton donor in catalysis. 299-305 (ATTGRRR) provides a ligand contact to substrate. Residues Arg305, 331–333 (KLD), and 413–415 (SVG) each bind GTP.

It belongs to the adenylosuccinate synthetase family. As to quaternary structure, homodimer. The cofactor is Mg(2+).

Its subcellular location is the cytoplasm. It catalyses the reaction IMP + L-aspartate + GTP = N(6)-(1,2-dicarboxyethyl)-AMP + GDP + phosphate + 2 H(+). The protein operates within purine metabolism; AMP biosynthesis via de novo pathway; AMP from IMP: step 1/2. Plays an important role in the de novo pathway of purine nucleotide biosynthesis. Catalyzes the first committed step in the biosynthesis of AMP from IMP. The protein is Adenylosuccinate synthetase of Desulfatibacillum aliphaticivorans.